The following is a 156-amino-acid chain: CD-NTase/cGAS isopeptidase (156 aa).

The MPN domain maps to 9–147 (IDDFDNHVVI…WIGKKIKNDI (139 aa)). Residue Glu38 is the Proton donor/acceptor of the active site. Zn(2+)-binding residues include His100, His102, and Asp113. Residues 100-113 (HTHPEDFPHPSFID) carry the JAMM motif motif.

The protein belongs to the peptidase M67B family. Cap3 isopeptidase subfamily.

Metalloprotease priming reversal component of a CBASS antivirus system. CBASS (cyclic oligonucleotide-based antiphage signaling system) provides immunity against bacteriophages. The CD-NTase protein (DncV) synthesizes cyclic nucleotides in response to infection; these serve as specific second messenger signals. The signals activate a diverse range of effectors, leading to bacterial cell death and thus abortive phage infection. A type II-A(GA) CBASS system. Functionally, reverses the primed state of DncV, the CD-NTase, cleaving it from cellular proteins. Cleaves a Sumo-DncV-DncV fusion protein precisely between the 2 DncV moieties. Its function is as follows. Protects E.coli against phage infection. When capV and dncV are introduced in E.coli MG1655 there is 1000-fold protection against phage P1; protection against other phage (T4, T5 and T6) requires the 2 subsequent genes. In another paper the capV-dncV-cap2-cap3 operon gives 10(4)-10(5)-fold protection against phages lambda, T2, T4 and T6, about 1000-fold protection against P1 and 10-fold protection against T5. The polypeptide is CD-NTase/cGAS isopeptidase (Escherichia coli (strain TW11681)).